We begin with the raw amino-acid sequence, 263 residues long: 4-hydroxy-tetrahydrodipicolinate reductase (263 aa).

NAD(+) is bound by residues 8–13 (GACGKM), aspartate 34, 97–99 (GTT), and 123–126 (APNF). Residue histidine 153 is the Proton donor/acceptor of the active site. Histidine 154 contributes to the (S)-2,3,4,5-tetrahydrodipicolinate binding site. Lysine 157 (proton donor) is an active-site residue. A (S)-2,3,4,5-tetrahydrodipicolinate-binding site is contributed by 163 to 164 (GT).

Belongs to the DapB family.

The protein localises to the cytoplasm. It catalyses the reaction (S)-2,3,4,5-tetrahydrodipicolinate + NAD(+) + H2O = (2S,4S)-4-hydroxy-2,3,4,5-tetrahydrodipicolinate + NADH + H(+). It carries out the reaction (S)-2,3,4,5-tetrahydrodipicolinate + NADP(+) + H2O = (2S,4S)-4-hydroxy-2,3,4,5-tetrahydrodipicolinate + NADPH + H(+). The protein operates within amino-acid biosynthesis; L-lysine biosynthesis via DAP pathway; (S)-tetrahydrodipicolinate from L-aspartate: step 4/4. Catalyzes the conversion of 4-hydroxy-tetrahydrodipicolinate (HTPA) to tetrahydrodipicolinate. In Carboxydothermus hydrogenoformans (strain ATCC BAA-161 / DSM 6008 / Z-2901), this protein is 4-hydroxy-tetrahydrodipicolinate reductase.